The sequence spans 216 residues: Peptide methionine sulfoxide reductase MsrA (216 aa).

Cysteine 54 is an active-site residue.

Belongs to the MsrA Met sulfoxide reductase family.

The catalysed reaction is L-methionyl-[protein] + [thioredoxin]-disulfide + H2O = L-methionyl-(S)-S-oxide-[protein] + [thioredoxin]-dithiol. The enzyme catalyses [thioredoxin]-disulfide + L-methionine + H2O = L-methionine (S)-S-oxide + [thioredoxin]-dithiol. Functionally, has an important function as a repair enzyme for proteins that have been inactivated by oxidation. Catalyzes the reversible oxidation-reduction of methionine sulfoxide in proteins to methionine. The chain is Peptide methionine sulfoxide reductase MsrA from Xanthomonas euvesicatoria pv. vesicatoria (strain 85-10) (Xanthomonas campestris pv. vesicatoria).